A 237-amino-acid chain; its full sequence is tRNA(His) guanylyltransferase (237 aa).

Alanine 2 is subject to N-acetylalanine. Mg(2+) is bound by residues aspartate 29 and glycine 30. GTP-binding residues include lysine 32, phenylalanine 33, histidine 34, lysine 44, and aspartate 47. Mg(2+) is bound at residue aspartate 77.

This sequence belongs to the tRNA(His) guanylyltransferase family. As to quaternary structure, homotetramer. Mg(2+) serves as cofactor.

The catalysed reaction is a 5'-end ribonucleotide-tRNA(His) + GTP + ATP + H2O = a 5'-end phospho-guanosine-ribonucleotide-tRNA(His) + AMP + 2 diphosphate + H(+). It carries out the reaction a 5'-end ribonucleotide-RNA + a ribonucleoside 5'-triphosphate + ATP + H2O = a 5'-end phospho-ribonucleoside-ribonucleotide-RNA + AMP + 2 diphosphate + H(+). In terms of biological role, acts as a tRNA(His) guanylyltransferase that catalyzes 3'-5' addition of a single guanosine residue to the -1 position of tRNA(His), to form a non-Watson-Crick G(-1):A-73 base pair. After addition of G(-1), THG1 removes pyrophosphate from the tRNA 5'-end, generating 5'-monophosphorylated G(-1)-containing tRNA which is important for recognition of tRNA(His) by its cognate histidyl-tRNA synthetase. In addition to the single-G(-1) addition reaction, THG1 polymerizes multiple G residues to the 5'-end of tRNA(His) variants using the 3'-end of the tRNA(His) acceptor stem as a template. This chain is tRNA(His) guanylyltransferase, found in Saccharomyces cerevisiae (strain ATCC 204508 / S288c) (Baker's yeast).